A 412-amino-acid chain; its full sequence is Peptidase T (412 aa).

H81 contributes to the Zn(2+) binding site. Residue D83 is part of the active site. Residue D144 participates in Zn(2+) binding. Residue E178 is the Proton acceptor of the active site. Zn(2+)-binding residues include E179, D201, and H383.

This sequence belongs to the peptidase M20B family. Requires Zn(2+) as cofactor.

The protein resides in the cytoplasm. It catalyses the reaction Release of the N-terminal residue from a tripeptide.. Functionally, cleaves the N-terminal amino acid of tripeptides. In Bacillus cereus (strain Q1), this protein is Peptidase T.